Reading from the N-terminus, the 95-residue chain is Fungal defensin plectasin (95 aa).

Residues 1–23 (MQFTTILSIGITVFGLLNTGAFA) form the signal peptide. The propeptide occupies 24-55 (APQPVPEAYAVSDPEAHPDDFAGMDANQLQKR). Beta-D-GlcNAc-(1-&gt;4)-Mur2Ac(oyl-L-Ala-gamma-D-Glu-L-Lys-D-Ala-D-Ala)-di-trans,octa-cis-undecaprenyl diphosphate-binding residues include Phe-57, Gly-58, and Cys-59. Intrachain disulfides connect Cys-59/Cys-85, Cys-70/Cys-92, and Cys-74/Cys-94. Residues 61–64 (GPWD) form a binds to membrane interface region. Beta-D-GlcNAc-(1-&gt;4)-Mur2Ac(oyl-L-Ala-gamma-D-Glu-L-Lys-D-Ala-D-Ala)-di-trans,octa-cis-undecaprenyl diphosphate is bound by residues Asp-67, His-73, Tyr-84, Ala-86, Gly-88, Cys-92, and Lys-93. The tract at residues 86–92 (AKGGFVC) is binds to membrane interface.

The protein belongs to the invertebrate defensin family. Type 2 subfamily.

The protein resides in the secreted. The protein localises to the host cell membrane. In terms of biological role, antimicrobial peptide that potently acts against several species of Gram-positive bacteria. It selectively inhibits peptidoglycan biosynthesis through complex formation with the cell wall precursor lipid II (1:1 molar ratio) thus inhibiting cell wall synthesis. It does not disrupt cell membranes. Is especially active against numerous clinical isolates of S.pneumoniae, including all 90 different serotypes and isolates resistant to clinically used antibiotics. In vitro, shows considerable selectivity for bacteria over mammalian cells. The peptide synthesized in D-amino acids does not show antibacterial activity. In vitro, acts on voltage-gated potassium channels by moderately inhibiting mammalian Kv1.3/KCNA3 (IC(50)=2.8 uM), and moderately inhibiting others potassium channels. The protein is Fungal defensin plectasin (DEF) of Pseudoplectania nigrella (Ebony cup).